Here is a 309-residue protein sequence, read N- to C-terminus: Pyridoxal 5'-phosphate synthase subunit PDX1.3 (309 aa).

M1 carries the N-acetylmethionine modification. D40 serves as a coordination point for D-ribose 5-phosphate. Catalysis depends on K97, which acts as the Schiff-base intermediate with D-ribose 5-phosphate. G169 contacts D-ribose 5-phosphate. R181 is a D-glyceraldehyde 3-phosphate binding site. Residues G230 and 251 to 252 (GS) each bind D-ribose 5-phosphate.

This sequence belongs to the PdxS/SNZ family. Homodimer or heterodimer with PDX1.1 or PDX1.2. Interacts with PDX2. Expressed in cotyledons, rapidly dividing root stele tissues, stems, leaves, flowers, mature pollen, and siliques.

Its subcellular location is the cytoplasm. It localises to the cell membrane. It is found in the membrane. It carries out the reaction aldehydo-D-ribose 5-phosphate + D-glyceraldehyde 3-phosphate + L-glutamine = pyridoxal 5'-phosphate + L-glutamate + phosphate + 3 H2O + H(+). It participates in cofactor biosynthesis; pyridoxal 5'-phosphate biosynthesis. In terms of biological role, catalyzes the formation of pyridoxal 5'-phosphate from ribose 5-phosphate (RBP), glyceraldehyde 3-phosphate (G3P) and ammonia. The ammonia is provided by PDX2. Can also use ribulose 5-phosphate and dihydroxyacetone phosphate as substrates, resulting from enzyme-catalyzed isomerization of RBP and G3P, respectively. Also plays an indirect role in resistance to singlet oxygen-generating photosensitizers. This Arabidopsis thaliana (Mouse-ear cress) protein is Pyridoxal 5'-phosphate synthase subunit PDX1.3 (PDX13).